A 142-amino-acid polypeptide reads, in one-letter code: MAIIIGADKAGQELKEVIKDYLKEGKYEVVDVSENEVRDFVDTTLAVAKEVNASEDNLGIVIDAYGVGSFMVATKIKGMVAAEVSDERSAYMTRGHNNARIITLGSEISAPGIAKNIIKGFVEGKYDGGRHQVRVDMLNKMC.

Belongs to the LacAB/RpiB family. Heteromultimeric protein consisting of LacA and LacB.

The catalysed reaction is aldehydo-D-galactose 6-phosphate = keto-D-tagatose 6-phosphate. It participates in carbohydrate metabolism; D-galactose 6-phosphate degradation; D-tagatose 6-phosphate from D-galactose 6-phosphate: step 1/1. The sequence is that of Galactose-6-phosphate isomerase subunit LacA 2 from Streptococcus pyogenes serotype M3 (strain ATCC BAA-595 / MGAS315).